The following is a 723-amino-acid chain: Fatty acid oxidation complex subunit alpha (723 aa).

The segment at 1 to 189 (MIYQAETLQV…KIGLLDAVVD (189 aa)) is enoyl-CoA hydratase/isomerase. Aspartate 296 is a substrate binding site. Positions 311–723 (SKDTQRAAVL…FYGAQQQGSI (413 aa)) are 3-hydroxyacyl-CoA dehydrogenase. Residues methionine 325, aspartate 344, 401–403 (VVE), lysine 408, and serine 430 contribute to the NAD(+) site. Histidine 451 functions as the For 3-hydroxyacyl-CoA dehydrogenase activity in the catalytic mechanism. Position 454 (asparagine 454) interacts with NAD(+). Asparagine 501 and tyrosine 661 together coordinate substrate.

This sequence in the N-terminal section; belongs to the enoyl-CoA hydratase/isomerase family. In the C-terminal section; belongs to the 3-hydroxyacyl-CoA dehydrogenase family. As to quaternary structure, heterotetramer of two alpha chains (FadB) and two beta chains (FadA).

It carries out the reaction a (3S)-3-hydroxyacyl-CoA + NAD(+) = a 3-oxoacyl-CoA + NADH + H(+). The enzyme catalyses a (3S)-3-hydroxyacyl-CoA = a (2E)-enoyl-CoA + H2O. The catalysed reaction is a 4-saturated-(3S)-3-hydroxyacyl-CoA = a (3E)-enoyl-CoA + H2O. It catalyses the reaction (3S)-3-hydroxybutanoyl-CoA = (3R)-3-hydroxybutanoyl-CoA. It carries out the reaction a (3Z)-enoyl-CoA = a 4-saturated (2E)-enoyl-CoA. The enzyme catalyses a (3E)-enoyl-CoA = a 4-saturated (2E)-enoyl-CoA. Its pathway is lipid metabolism; fatty acid beta-oxidation. Its function is as follows. Involved in the aerobic and anaerobic degradation of long-chain fatty acids via beta-oxidation cycle. Catalyzes the formation of 3-oxoacyl-CoA from enoyl-CoA via L-3-hydroxyacyl-CoA. It can also use D-3-hydroxyacyl-CoA and cis-3-enoyl-CoA as substrate. This is Fatty acid oxidation complex subunit alpha from Vibrio campbellii (strain ATCC BAA-1116).